Consider the following 500-residue polypeptide: Putative antiporter subunit mnhD2 (500 aa).

14 consecutive transmembrane segments (helical) span residues 2–22, 32–52, 78–98, 108–128, 130–150, 161–181, 209–229, 240–260, 273–293, 308–328, 330–350, 368–388, 403–423, and 450–470; these read MSNL…ILVF, ILSI…LIYV, LSLL…AYGF, FHLP…FLTS, LFNL…LVTL, IVYV…IGML, ISLV…FMWL, LAAL…IRFF, TLLV…VIAY, IGFI…GAIF, LAND…LVYM, FFGV…PFSG, GNYI…YSLF, and GLLS…PVVL.

The protein belongs to the CPA3 antiporters (TC 2.A.63) subunit D family. May form a heterooligomeric complex that consists of seven subunits: mnhA2, mnhB2, mnhC2, mnhD2, mnhE2, mnhF2 and mnhG2.

The protein localises to the cell membrane. The protein is Putative antiporter subunit mnhD2 (mnhD2) of Staphylococcus epidermidis (strain ATCC 12228 / FDA PCI 1200).